The sequence spans 260 residues: Indole-3-glycerol phosphate synthase (260 aa).

This sequence belongs to the TrpC family.

It carries out the reaction 1-(2-carboxyphenylamino)-1-deoxy-D-ribulose 5-phosphate + H(+) = (1S,2R)-1-C-(indol-3-yl)glycerol 3-phosphate + CO2 + H2O. Its pathway is amino-acid biosynthesis; L-tryptophan biosynthesis; L-tryptophan from chorismate: step 4/5. This Staphylococcus aureus (strain MRSA252) protein is Indole-3-glycerol phosphate synthase.